The following is a 487-amino-acid chain: Betaine aldehyde dehydrogenase (487 aa).

Residues S26 and D93 each coordinate K(+). Position 150-152 (150-152 (GAW)) interacts with NAD(+). Residue K162 is the Charge relay system of the active site. NAD(+) contacts are provided by residues 176–179 (KPSE) and 229–232 (SVPT). K(+) is bound at residue L244. The Proton acceptor role is filled by E250. 3 residues coordinate NAD(+): G252, C284, and E384. The active-site Nucleophile is the C284. C284 bears the Cysteine sulfenic acid (-SOH) mark. K454 and G457 together coordinate K(+). The Charge relay system role is filled by E461.

Belongs to the aldehyde dehydrogenase family. Dimer of dimers. K(+) serves as cofactor.

It catalyses the reaction betaine aldehyde + NAD(+) + H2O = glycine betaine + NADH + 2 H(+). Its pathway is amine and polyamine biosynthesis; betaine biosynthesis via choline pathway; betaine from betaine aldehyde: step 1/1. Functionally, involved in the biosynthesis of the osmoprotectant glycine betaine. Catalyzes the irreversible oxidation of betaine aldehyde to the corresponding acid. The chain is Betaine aldehyde dehydrogenase from Rhizobium etli (strain CIAT 652).